Consider the following 131-residue polypeptide: uncharacterized protein (131 aa).

A run of 4 helical transmembrane segments spans residues 7–29, 49–69, 76–98, and 102–124; these read LLKF…SLLY, LVKV…LIAL, LILI…LFTY, and ELSE…FLYL.

It is found in the cell membrane. This is an uncharacterized protein from Aquifex aeolicus (strain VF5).